Here is a 531-residue protein sequence, read N- to C-terminus: T-complex protein 1 subunit zeta-2 (531 aa).

This sequence belongs to the TCP-1 chaperonin family. In terms of assembly, component of the chaperonin-containing T-complex (TRiC), a heterooligomeric complex of about 850 to 900 kDa that forms two stacked rings, 12 to 16 nm in diameter.

It is found in the cytoplasm. Component of the chaperonin-containing T-complex (TRiC), a molecular chaperone complex that assists the folding of proteins upon ATP hydrolysis. The sequence is that of T-complex protein 1 subunit zeta-2 (CCT6B) from Bos taurus (Bovine).